Reading from the N-terminus, the 439-residue chain is FAD-linked oxidoreductase phmC (439 aa).

Positions 1-19 are cleaved as a signal peptide; the sequence is MLSSILLTIFCAFLSSTGA. N-linked (GlcNAc...) asparagine glycans are attached at residues Asn-29 and Asn-84. In terms of domain architecture, FAD-binding PCMH-type spans 89 to 272; it reads QGSVPSYYIQ…LSTTTRVEPK (184 aa). Residues Asn-285 and Asn-300 are each glycosylated (N-linked (GlcNAc...) asparagine).

This sequence belongs to the oxygen-dependent FAD-linked oxidoreductase family. It depends on FAD as a cofactor.

It functions in the pathway mycotoxin biosynthesis. Its function is as follows. FAD-linked oxidoreductase; part of the gene cluster that mediates the biosynthesis of the mycotoxins phomacins, leucine-derived cytochalasans with potent actin polymerization-inhibitory activities and monocot-specific antigerminative activities. The first step in the pathway is catalyzed by the hybrid PKS-NRPS phmA, assisted by the enoyl reductase phmE, that are responsible for fusion of the leucine precursor and the polyketide backbone to produce a 2-pyrrolidone intermediate. The polyketide synthase module (PKS) of phmA is responsible for the synthesis of the polyketide backbone and the downstream nonribosomal peptide synthetase (NRPS) amidates the carboxyl end of the polyketide with the leucine precursor. Because phmA lacks a designated enoylreductase (ER) domain, the required activity is provided the enoyl reductase phmE. Reduction by the hydrolyase phmG, followed by dehydration and intra-molecular Diels-Alder cyclization by the Diels-Alderase phmD then yield the required isoindolone-fused macrocycle. A number of oxidative steps catalyzed by the tailoring cytochrome P450 monooxygenase phmB, the FAD-linked oxidoreductase phmC and the short-chain dehydrogenase/reductase phmF, are further required to afford the final products, phomacin D and phomacin E. This is FAD-linked oxidoreductase phmC from Phaeosphaeria nodorum (strain SN15 / ATCC MYA-4574 / FGSC 10173) (Glume blotch fungus).